Here is a 138-residue protein sequence, read N- to C-terminus: Acidic phospholipase A2 AplTX-I (138 aa).

Positions 1 to 16 (MRTLWIMAVLLLGVEG) are cleaved as a signal peptide. 7 cysteine pairs are disulfide-bonded: Cys-42–Cys-131, Cys-44–Cys-60, Cys-59–Cys-111, Cys-65–Cys-138, Cys-66–Cys-104, Cys-73–Cys-97, and Cys-91–Cys-102. 3 residues coordinate Ca(2+): Tyr-43, Gly-45, and Gly-47. His-63 is an active-site residue. Asp-64 contacts Ca(2+). Residue Asp-105 is part of the active site.

As to quaternary structure, monomer. Requires Ca(2+) as cofactor. As to expression, expressed by the venom gland.

Its subcellular location is the secreted. It carries out the reaction a 1,2-diacyl-sn-glycero-3-phosphocholine + H2O = a 1-acyl-sn-glycero-3-phosphocholine + a fatty acid + H(+). With respect to regulation, inhibited by divalent cations different from calcium ions (cadmium, magnesium, manganese, zinc), since they act as competitive antagonists of this cofactor. Its function is as follows. Snake venom phospholipase A2 (PLA2) that triggers a high neuromuscular toxicity in chick biventer cervicis preparations, but not in mouse phrenic nerve-diaphragm (PND) preparations, suggesting a selective neurotoxin activity towards birds. Does not induce myotoxic, coagulant, anticoagulant, edema, and antibacterial activities. PLA2 catalyzes the calcium-dependent hydrolysis of the 2-acyl groups in 3-sn-phosphoglycerides. This chain is Acidic phospholipase A2 AplTX-I, found in Agkistrodon piscivorus leucostoma (Western cottonmouth).